A 526-amino-acid chain; its full sequence is ATP synthase subunit alpha (526 aa).

171–178 (GDRQTGKT) provides a ligand contact to ATP.

This sequence belongs to the ATPase alpha/beta chains family. As to quaternary structure, F-type ATPases have 2 components, CF(1) - the catalytic core - and CF(0) - the membrane proton channel. CF(1) has five subunits: alpha(3), beta(3), gamma(1), delta(1), epsilon(1). CF(0) has four main subunits: a, b, b' and c.

It is found in the cell inner membrane. The catalysed reaction is ATP + H2O + 4 H(+)(in) = ADP + phosphate + 5 H(+)(out). Its function is as follows. Produces ATP from ADP in the presence of a proton gradient across the membrane. The alpha chain is a regulatory subunit. This chain is ATP synthase subunit alpha, found in Chlorobium phaeobacteroides (strain BS1).